We begin with the raw amino-acid sequence, 319 residues long: ATP-dependent 6-phosphofructokinase (319 aa).

An ATP-binding site is contributed by Gly11. Position 21 to 25 (21 to 25 (RAVVR)) interacts with ADP. ATP-binding positions include 72–73 (RC) and 102–105 (GDGS). Asp103 is a Mg(2+) binding site. 125-127 (TID) contacts substrate. The Proton acceptor role is filled by Asp127. An ADP-binding site is contributed by Arg154. Residues Arg162 and 169-171 (MGR) contribute to the substrate site. ADP contacts are provided by residues 185–187 (GAE), Arg211, and 213–215 (KKH). Substrate-binding positions include Glu222, Arg243, and 249–252 (HVQR).

It belongs to the phosphofructokinase type A (PFKA) family. ATP-dependent PFK group I subfamily. Prokaryotic clade 'B1' sub-subfamily. As to quaternary structure, homotetramer. It depends on Mg(2+) as a cofactor.

It is found in the cytoplasm. It catalyses the reaction beta-D-fructose 6-phosphate + ATP = beta-D-fructose 1,6-bisphosphate + ADP + H(+). The protein operates within carbohydrate degradation; glycolysis; D-glyceraldehyde 3-phosphate and glycerone phosphate from D-glucose: step 3/4. Allosterically activated by ADP and other diphosphonucleosides, and allosterically inhibited by phosphoenolpyruvate. Its function is as follows. Catalyzes the phosphorylation of D-fructose 6-phosphate to fructose 1,6-bisphosphate by ATP, the first committing step of glycolysis. In Bacillus cereus (strain B4264), this protein is ATP-dependent 6-phosphofructokinase.